A 135-amino-acid polypeptide reads, in one-letter code: Nucleoside diphosphate kinase (135 aa).

ATP contacts are provided by Lys9, Phe57, Arg85, Thr91, Arg102, and Asn112. Residue His115 is the Pros-phosphohistidine intermediate of the active site.

The protein belongs to the NDK family. Homotetramer. Mg(2+) is required as a cofactor.

The protein resides in the cytoplasm. It carries out the reaction a 2'-deoxyribonucleoside 5'-diphosphate + ATP = a 2'-deoxyribonucleoside 5'-triphosphate + ADP. It catalyses the reaction a ribonucleoside 5'-diphosphate + ATP = a ribonucleoside 5'-triphosphate + ADP. Major role in the synthesis of nucleoside triphosphates other than ATP. The ATP gamma phosphate is transferred to the NDP beta phosphate via a ping-pong mechanism, using a phosphorylated active-site intermediate. In Thermobifida fusca (strain YX), this protein is Nucleoside diphosphate kinase.